The chain runs to 84 residues: Cell division topological specificity factor (84 aa).

Belongs to the MinE family.

Its function is as follows. Prevents the cell division inhibition by proteins MinC and MinD at internal division sites while permitting inhibition at polar sites. This ensures cell division at the proper site by restricting the formation of a division septum at the midpoint of the long axis of the cell. This Burkholderia mallei (strain NCTC 10247) protein is Cell division topological specificity factor.